Consider the following 149-residue polypeptide: MATNTNVSRVQEDGRKVKRSVYHRMRKEKEASEPIVEARAVTKYVRISPRKARSMANSIRNKDISEALQILTFSPKKSARILYKTLMSAIANAENNFGLNAENLYVSEIMVNEGPRLKRLWPRSHGRADILQKRMSHIYITVRDKSADK.

This sequence belongs to the universal ribosomal protein uL22 family. As to quaternary structure, part of the 50S ribosomal subunit.

This protein binds specifically to 23S rRNA; its binding is stimulated by other ribosomal proteins, e.g. L4, L17, and L20. It is important during the early stages of 50S assembly. It makes multiple contacts with different domains of the 23S rRNA in the assembled 50S subunit and ribosome. In terms of biological role, the globular domain of the protein is located near the polypeptide exit tunnel on the outside of the subunit, while an extended beta-hairpin is found that lines the wall of the exit tunnel in the center of the 70S ribosome. The chain is Large ribosomal subunit protein uL22 from Petrotoga mobilis (strain DSM 10674 / SJ95).